We begin with the raw amino-acid sequence, 130 residues long: Acyl carrier protein 2, chloroplastic (130 aa).

The transit peptide at 1-48 (MASITGSSVSFKCAPLQSSFNSKNYALKSSVTFWRRTPVMPRGLSVSC) directs the protein to the chloroplast. Residues 52–127 (PEMVTKVSDI…EAADMIEALQ (76 aa)) enclose the Carrier domain. Serine 87 is subject to O-(pantetheine 4'-phosphoryl)serine.

Belongs to the acyl carrier protein (ACP) family. In terms of processing, 4'-phosphopantetheine is transferred from CoA to a specific serine of apo-ACP by acpS. This modification is essential for activity because fatty acids are bound in thioester linkage to the sulfhydryl of the prosthetic group. As to expression, roots, leaves and seeds.

Its subcellular location is the plastid. It is found in the chloroplast. The protein operates within lipid metabolism; fatty acid biosynthesis. Functionally, carrier of the growing fatty acid chain in fatty acid biosynthesis. The sequence is that of Acyl carrier protein 2, chloroplastic (ACL1.2) from Spinacia oleracea (Spinach).